A 1403-amino-acid chain; its full sequence is DNA-directed RNA polymerase subunit beta' (1403 aa).

4 residues coordinate Zn(2+): Cys-68, Cys-70, Cys-83, and Cys-86. Mg(2+) is bound by residues Asp-459, Asp-461, and Asp-463. 4 residues coordinate Zn(2+): Cys-814, Cys-887, Cys-894, and Cys-897.

The protein belongs to the RNA polymerase beta' chain family. As to quaternary structure, the RNAP catalytic core consists of 2 alpha, 1 beta, 1 beta' and 1 omega subunit. When a sigma factor is associated with the core the holoenzyme is formed, which can initiate transcription. Mg(2+) serves as cofactor. The cofactor is Zn(2+).

It catalyses the reaction RNA(n) + a ribonucleoside 5'-triphosphate = RNA(n+1) + diphosphate. Functionally, DNA-dependent RNA polymerase catalyzes the transcription of DNA into RNA using the four ribonucleoside triphosphates as substrates. The sequence is that of DNA-directed RNA polymerase subunit beta' from Solibacter usitatus (strain Ellin6076).